The chain runs to 507 residues: Probable cytosol aminopeptidase (507 aa).

Mn(2+) contacts are provided by K275 and D280. The active site involves K287. 3 residues coordinate Mn(2+): D298, D357, and E359. Residue R361 is part of the active site.

It belongs to the peptidase M17 family. The cofactor is Mn(2+).

It localises to the cytoplasm. The enzyme catalyses Release of an N-terminal amino acid, Xaa-|-Yaa-, in which Xaa is preferably Leu, but may be other amino acids including Pro although not Arg or Lys, and Yaa may be Pro. Amino acid amides and methyl esters are also readily hydrolyzed, but rates on arylamides are exceedingly low.. It catalyses the reaction Release of an N-terminal amino acid, preferentially leucine, but not glutamic or aspartic acids.. In terms of biological role, presumably involved in the processing and regular turnover of intracellular proteins. Catalyzes the removal of unsubstituted N-terminal amino acids from various peptides. This chain is Probable cytosol aminopeptidase, found in Rhodopirellula baltica (strain DSM 10527 / NCIMB 13988 / SH1).